The primary structure comprises 232 residues: Pyridoxal 5'-phosphate synthase subunit PdxS (232 aa).

The active-site Schiff-base intermediate with D-ribose 5-phosphate is the Lys-23. Gly-95 lines the D-ribose 5-phosphate pocket. Arg-107 serves as a coordination point for D-glyceraldehyde 3-phosphate. Residues Gly-156 and 177 to 178 each bind D-ribose 5-phosphate; that span reads GS.

This sequence belongs to the PdxS/SNZ family. In the presence of PdxT, forms a dodecamer of heterodimers.

The enzyme catalyses aldehydo-D-ribose 5-phosphate + D-glyceraldehyde 3-phosphate + L-glutamine = pyridoxal 5'-phosphate + L-glutamate + phosphate + 3 H2O + H(+). Its pathway is cofactor biosynthesis; pyridoxal 5'-phosphate biosynthesis. Functionally, catalyzes the formation of pyridoxal 5'-phosphate from ribose 5-phosphate (RBP), glyceraldehyde 3-phosphate (G3P) and ammonia. The ammonia is provided by the PdxT subunit. Can also use ribulose 5-phosphate and dihydroxyacetone phosphate as substrates, resulting from enzyme-catalyzed isomerization of RBP and G3P, respectively. This Clostridium novyi protein is Pyridoxal 5'-phosphate synthase subunit PdxS.